We begin with the raw amino-acid sequence, 1379 residues long: DNA-directed RNA polymerase subunit beta'' (1379 aa).

Zn(2+) is bound by residues C220, C293, C300, and C303.

The protein belongs to the RNA polymerase beta' chain family. RpoC2 subfamily. As to quaternary structure, in plastids the minimal PEP RNA polymerase catalytic core is composed of four subunits: alpha, beta, beta', and beta''. When a (nuclear-encoded) sigma factor is associated with the core the holoenzyme is formed, which can initiate transcription. It depends on Zn(2+) as a cofactor.

The protein localises to the plastid. It is found in the chloroplast. It catalyses the reaction RNA(n) + a ribonucleoside 5'-triphosphate = RNA(n+1) + diphosphate. In terms of biological role, DNA-dependent RNA polymerase catalyzes the transcription of DNA into RNA using the four ribonucleoside triphosphates as substrates. This chain is DNA-directed RNA polymerase subunit beta'', found in Capsella bursa-pastoris (Shepherd's purse).